A 217-amino-acid polypeptide reads, in one-letter code: Coiled-coil domain-containing protein 124-B (217 aa).

Residues 1–123 (MPKKFQSENT…EKPKTHLEIP (123 aa)) are disordered. 3 stretches are compositionally biased toward basic and acidic residues: residues 18-45 (RKAEAKAVADAKRKKETEDAFWQDDDKH), 52-74 (RKEEKEKKRLELLERKKESQRLL), and 98-123 (QIEETLCKEEKHKDAPEKPKTHLEIP). Positions 41–83 (DDDKHVVRKEHRKEEKEKKRLELLERKKESQRLLDEEDSKMKG) form a coiled coil.

Belongs to the CCDC124 family. As to quaternary structure, associates with translationally inactive ribosomes in the nonrotated state.

Its subcellular location is the cytoplasm. It localises to the cytoskeleton. It is found in the microtubule organizing center. The protein resides in the centrosome. The protein localises to the midbody. In terms of biological role, ribosome-binding protein involved in ribosome hibernation: associates with translationally inactive ribosomes and stabilizes the nonrotated conformation of the 80S ribosome, thereby promoting ribosome preservation and storage. This is Coiled-coil domain-containing protein 124-B (ccdc124-b) from Xenopus laevis (African clawed frog).